The chain runs to 347 residues: Isopentenyl-diphosphate delta-isomerase (347 aa).

5-6 provides a ligand contact to substrate; that stretch reads RK. FMN is bound by residues serine 61, 62–64, serine 92, and asparagine 120; that span reads SMT. 92–94 contacts substrate; sequence SMR. Glutamine 159 lines the substrate pocket. Glutamate 160 contributes to the Mg(2+) binding site. Residues lysine 189, serine 214, threonine 219, 269 to 271, and 290 to 291 contribute to the FMN site; these read GLR and AR.

This sequence belongs to the IPP isomerase type 2 family. Homooctamer. Dimer of tetramers. The cofactor is FMN. It depends on NADPH as a cofactor. Mg(2+) is required as a cofactor.

Its subcellular location is the cytoplasm. The catalysed reaction is isopentenyl diphosphate = dimethylallyl diphosphate. Involved in the biosynthesis of isoprenoids. Catalyzes the 1,3-allylic rearrangement of the homoallylic substrate isopentenyl (IPP) to its allylic isomer, dimethylallyl diphosphate (DMAPP). The sequence is that of Isopentenyl-diphosphate delta-isomerase from Thermoplasma volcanium (strain ATCC 51530 / DSM 4299 / JCM 9571 / NBRC 15438 / GSS1).